The sequence spans 64 residues: Bacteriocin plantaricin ASM1 (64 aa).

The signal sequence occupies residues 1 to 21; that stretch reads MSKLVKTLTVDEISKIQTNGG. The lanthionine (Ser-Cys) cross-link spans 61–64; sequence SYHC.

Contains 2 disulfide bonds.

It localises to the secreted. Bacteriocin with a narrow antibacterial spectrum. Antibacterial activity against the Gram-positive bacteria L.plantarun, L.pentosus, L.curvatus, L.lindneri, L.mesenteroides and E.faecilis. Lacks antibacterial activity against the Gram-positive bacteria L.brevis, L.sakei, L.lactis, P.acidilactici, B.subtilis, B.cereus, L.monocytogenes and S.aureus, and against the Gram-negative bacteria E.coli and S.typhimurium. This chain is Bacteriocin plantaricin ASM1, found in Lactiplantibacillus plantarum (Lactobacillus plantarum).